A 368-amino-acid polypeptide reads, in one-letter code: Phospho-N-acetylmuramoyl-pentapeptide-transferase (368 aa).

10 helical membrane-spanning segments follow: residues 32 to 52 (TGGAVVTGALFVFLFGPWIID), 79 to 99 (TPTMGGLMILSGLVVSTVLWA), 102 to 122 (LNPYVWIVLAVTLGFGLIGFY), 142 to 160 (LLLELLIALAACYALTRLG), 176 to 196 (VALDLGWFFLGFGAFIIVGAG), 207 to 227 (GLAIVPVMIAAASFAMIAYLA), 244 to 264 (AGELAVLCGAVLGAGLGFLWF), 271 to 291 (IFMGDTGSLALGGMLGSIAVA), 296 to 316 (IVLAVIGGLFVLEAVSVIVQV), and 345 to 365 (QIVIRFWIISVMLALAGLSTL).

Belongs to the glycosyltransferase 4 family. MraY subfamily. Mg(2+) serves as cofactor.

The protein localises to the cell inner membrane. It catalyses the reaction UDP-N-acetyl-alpha-D-muramoyl-L-alanyl-gamma-D-glutamyl-meso-2,6-diaminopimeloyl-D-alanyl-D-alanine + di-trans,octa-cis-undecaprenyl phosphate = di-trans,octa-cis-undecaprenyl diphospho-N-acetyl-alpha-D-muramoyl-L-alanyl-D-glutamyl-meso-2,6-diaminopimeloyl-D-alanyl-D-alanine + UMP. It participates in cell wall biogenesis; peptidoglycan biosynthesis. Its function is as follows. Catalyzes the initial step of the lipid cycle reactions in the biosynthesis of the cell wall peptidoglycan: transfers peptidoglycan precursor phospho-MurNAc-pentapeptide from UDP-MurNAc-pentapeptide onto the lipid carrier undecaprenyl phosphate, yielding undecaprenyl-pyrophosphoryl-MurNAc-pentapeptide, known as lipid I. This chain is Phospho-N-acetylmuramoyl-pentapeptide-transferase, found in Nitrobacter winogradskyi (strain ATCC 25391 / DSM 10237 / CIP 104748 / NCIMB 11846 / Nb-255).